A 318-amino-acid polypeptide reads, in one-letter code: Acetyl-coenzyme A carboxylase carboxyl transferase subunit alpha (318 aa).

The CoA carboxyltransferase C-terminal domain maps to K38–A292.

This sequence belongs to the AccA family. As to quaternary structure, acetyl-CoA carboxylase is a heterohexamer composed of biotin carboxyl carrier protein (AccB), biotin carboxylase (AccC) and two subunits each of ACCase subunit alpha (AccA) and ACCase subunit beta (AccD).

The protein localises to the cytoplasm. It catalyses the reaction N(6)-carboxybiotinyl-L-lysyl-[protein] + acetyl-CoA = N(6)-biotinyl-L-lysyl-[protein] + malonyl-CoA. It participates in lipid metabolism; malonyl-CoA biosynthesis; malonyl-CoA from acetyl-CoA: step 1/1. In terms of biological role, component of the acetyl coenzyme A carboxylase (ACC) complex. First, biotin carboxylase catalyzes the carboxylation of biotin on its carrier protein (BCCP) and then the CO(2) group is transferred by the carboxyltransferase to acetyl-CoA to form malonyl-CoA. The sequence is that of Acetyl-coenzyme A carboxylase carboxyl transferase subunit alpha from Listeria welshimeri serovar 6b (strain ATCC 35897 / DSM 20650 / CCUG 15529 / CIP 8149 / NCTC 11857 / SLCC 5334 / V8).